We begin with the raw amino-acid sequence, 278 residues long: Imidazole glycerol phosphate synthase subunit HisF (278 aa).

Catalysis depends on residues Asp11 and Asp130.

This sequence belongs to the HisA/HisF family. Heterodimer of HisH and HisF.

It is found in the cytoplasm. It catalyses the reaction 5-[(5-phospho-1-deoxy-D-ribulos-1-ylimino)methylamino]-1-(5-phospho-beta-D-ribosyl)imidazole-4-carboxamide + L-glutamine = D-erythro-1-(imidazol-4-yl)glycerol 3-phosphate + 5-amino-1-(5-phospho-beta-D-ribosyl)imidazole-4-carboxamide + L-glutamate + H(+). It functions in the pathway amino-acid biosynthesis; L-histidine biosynthesis; L-histidine from 5-phospho-alpha-D-ribose 1-diphosphate: step 5/9. Its function is as follows. IGPS catalyzes the conversion of PRFAR and glutamine to IGP, AICAR and glutamate. The HisF subunit catalyzes the cyclization activity that produces IGP and AICAR from PRFAR using the ammonia provided by the HisH subunit. This is Imidazole glycerol phosphate synthase subunit HisF from Thermodesulfovibrio yellowstonii (strain ATCC 51303 / DSM 11347 / YP87).